The primary structure comprises 274 residues: Exosome complex component Rrp42 (274 aa).

The protein belongs to the RNase PH family. Rrp42 subfamily. As to quaternary structure, component of the archaeal exosome complex. Forms a hexameric ring-like arrangement composed of 3 Rrp41-Rrp42 heterodimers. The hexameric ring associates with a trimer of Rrp4 and/or Csl4 subunits.

The protein localises to the cytoplasm. Functionally, non-catalytic component of the exosome, which is a complex involved in RNA degradation. Contributes to the structuring of the Rrp41 active site. The sequence is that of Exosome complex component Rrp42 from Pyrobaculum aerophilum (strain ATCC 51768 / DSM 7523 / JCM 9630 / CIP 104966 / NBRC 100827 / IM2).